Here is a 211-residue protein sequence, read N- to C-terminus: MSALRTRLDELIAQTDLEVSEKQREQLVGYVELLDKWNKAYNLTSVRDPLEMLVKHILDSIVVSTHLPGERFIDVGTGPGLPGIPLAIMNPEKTFFLLDSLGKRIRFIKQVVHTLGLKNVTAIQSRVEEFQPEEKFDGVLSRAFASMTDMVEWCHHLPKQDSGVFLALKGLHPKDEIDLLPEWCSVTEVISLAVPELEGDRHLVILSRKEN.

S-adenosyl-L-methionine is bound by residues Gly-76, Leu-81, 127-128 (VE), and Arg-142.

This sequence belongs to the methyltransferase superfamily. RNA methyltransferase RsmG family.

It localises to the cytoplasm. It catalyses the reaction guanosine(527) in 16S rRNA + S-adenosyl-L-methionine = N(7)-methylguanosine(527) in 16S rRNA + S-adenosyl-L-homocysteine. Functionally, specifically methylates the N7 position of guanine in position 527 of 16S rRNA. The chain is Ribosomal RNA small subunit methyltransferase G from Vibrio campbellii (strain ATCC BAA-1116).